The primary structure comprises 400 residues: Putative F-box protein At1g30920 (400 aa).

Positions 4–49 (EENTDSIPIDLILDILSRLPSKSIARCRCVSKLWESMIRQSYFTEL) constitute an F-box domain.

The sequence is that of Putative F-box protein At1g30920 from Arabidopsis thaliana (Mouse-ear cress).